Reading from the N-terminus, the 122-residue chain is Large ribosomal subunit protein uL14 (122 aa).

This sequence belongs to the universal ribosomal protein uL14 family. As to quaternary structure, part of the 50S ribosomal subunit. Forms a cluster with proteins L3 and L19. In the 70S ribosome, L14 and L19 interact and together make contacts with the 16S rRNA in bridges B5 and B8.

In terms of biological role, binds to 23S rRNA. Forms part of two intersubunit bridges in the 70S ribosome. The protein is Large ribosomal subunit protein uL14 of Clostridium perfringens (strain ATCC 13124 / DSM 756 / JCM 1290 / NCIMB 6125 / NCTC 8237 / Type A).